Reading from the N-terminus, the 445-residue chain is Anthranilate N-benzoyltransferase protein 1 (445 aa).

Residues His164 and Asp392 each act as proton acceptor in the active site.

The protein belongs to the plant acyltransferase family. Post-translationally, N-terminus is blocked.

The catalysed reaction is anthranilate + benzoyl-CoA = N-benzoylanthranilate + CoA. It functions in the pathway phytoalexin biosynthesis; methoxydianthramide B biosynthesis. Functionally, catalyzes the formation of N-benzoylanthranilate, in the course of methoxydianthramide B, a phytoalexin. Phytoalexins are produced in response to infection by parasites, and are essential for the expression of disease resistance. The polypeptide is Anthranilate N-benzoyltransferase protein 1 (HCBT1) (Dianthus caryophyllus (Carnation)).